A 148-amino-acid chain; its full sequence is Macrodomain Ter protein (148 aa).

The protein belongs to the MatP family. In terms of assembly, homodimer.

It localises to the cytoplasm. In terms of biological role, required for spatial organization of the terminus region of the chromosome (Ter macrodomain) during the cell cycle. Prevents early segregation of duplicated Ter macrodomains during cell division. Binds specifically to matS, which is a 13 bp signature motif repeated within the Ter macrodomain. The polypeptide is Macrodomain Ter protein (Aliivibrio salmonicida (strain LFI1238) (Vibrio salmonicida (strain LFI1238))).